We begin with the raw amino-acid sequence, 275 residues long: Lincomycin biosynthesis protein LmbN (275 aa).

The Carrier domain occupies 1 to 78; sequence MSTLDEVLAL…AIAATVARIT (78 aa). Ser-37 carries the post-translational modification O-(pantetheine 4'-phosphoryl)serine. An SIS domain is found at 113–275; the sequence is LFDTWHAGGT…HHALCVAHAP (163 aa).

The protein operates within antibiotic biosynthesis; lincomycin biosynthesis. The chain is Lincomycin biosynthesis protein LmbN (lmbN) from Streptomyces lincolnensis.